The chain runs to 184 residues: Ribosome-recycling factor (184 aa).

A disordered region spans residues 133 to 153; it reads DSNDELKKQQKNSDITEDDLR.

It belongs to the RRF family.

The protein resides in the cytoplasm. Responsible for the release of ribosomes from messenger RNA at the termination of protein biosynthesis. May increase the efficiency of translation by recycling ribosomes from one round of translation to another. This is Ribosome-recycling factor from Staphylococcus saprophyticus subsp. saprophyticus (strain ATCC 15305 / DSM 20229 / NCIMB 8711 / NCTC 7292 / S-41).